We begin with the raw amino-acid sequence, 521 residues long: MTAPHTSANDRVIIFDTTLRDGEQCPGATMTFEEKLEVASLLDSMGVDVIEAGFPIASDGDFEAVHEIAKRAKNAVICGLSRAGAKDIDRCAEAIKPAKQGRIHTFLSTSPVHMKYKLQMDAAQVYELVISSVTRARNHTDNVEWSSEDGTRTEFDFLCKCVEAAIKAGASTINIPDTVGYSVPEEYYDLFKRVRENVPNSDKAIFSVHCHDDLGMAVANSLAGIRGGARQIECTVNGIGERAGNTALEEVVMAMKVRNDKLPYWNKIDTTMLTRASKVVSAATSFPVQYNKAIVGRNAFAHESGIHQDGMLKNAETYEIMLPESVGVKQTSLVMGKHSGRHAFIHKLEEMGYKLGQNQLEDAFVRFKALADRKKDIYDEDIEALVDLEIAQSHDRIKLVSLTVIAGTHGPQRATMKLDVDGQTKIEEAEGNGPVDAVFNCIKALVPHVAKLELYQVHAVTEGTDAQAEVSVRLSHEGRSVTSRASDPDTLVASAKAYLGALNKIVMKRQRDMAAPAAAAS.

A Pyruvate carboxyltransferase domain is found at 12-274; that stretch reads VIIFDTTLRD…WNKIDTTMLT (263 aa). Residues Asp21, His209, His211, and Asn245 each contribute to the Mn(2+) site. The segment at 398–521 is regulatory domain; the sequence is KLVSLTVIAG…DMAAPAAAAS (124 aa).

Belongs to the alpha-IPM synthase/homocitrate synthase family. LeuA type 1 subfamily. As to quaternary structure, homodimer. Mn(2+) is required as a cofactor.

It is found in the cytoplasm. It carries out the reaction 3-methyl-2-oxobutanoate + acetyl-CoA + H2O = (2S)-2-isopropylmalate + CoA + H(+). It functions in the pathway amino-acid biosynthesis; L-leucine biosynthesis; L-leucine from 3-methyl-2-oxobutanoate: step 1/4. Catalyzes the condensation of the acetyl group of acetyl-CoA with 3-methyl-2-oxobutanoate (2-ketoisovalerate) to form 3-carboxy-3-hydroxy-4-methylpentanoate (2-isopropylmalate). This chain is 2-isopropylmalate synthase, found in Rhodopseudomonas palustris (strain BisA53).